A 555-amino-acid polypeptide reads, in one-letter code: Glutamine--tRNA ligase (555 aa).

The short motif at 35 to 45 is the 'HIGH' region element; the sequence is PEPNGYLHIGH. Residues 36 to 38 and 42 to 48 each bind ATP; these read EPN and HIGHAKS. Residues D68 and Y213 each contribute to the L-glutamine site. ATP is bound by residues T232, 262 to 263, and 270 to 272; these read RL and MSK. The 'KMSKS' region signature appears at 269 to 273; it reads VMSKR.

It belongs to the class-I aminoacyl-tRNA synthetase family. As to quaternary structure, monomer.

The protein localises to the cytoplasm. It catalyses the reaction tRNA(Gln) + L-glutamine + ATP = L-glutaminyl-tRNA(Gln) + AMP + diphosphate. The polypeptide is Glutamine--tRNA ligase (Photobacterium profundum (strain SS9)).